Reading from the N-terminus, the 123-residue chain is Small ribosomal subunit protein uS13 (123 aa).

Positions 95–123 (GLPVRGQKTKTNARTRKGPKKAVASKKKK) are disordered.

Belongs to the universal ribosomal protein uS13 family. Part of the 30S ribosomal subunit. Forms a loose heterodimer with protein S19. Forms two bridges to the 50S subunit in the 70S ribosome.

In terms of biological role, located at the top of the head of the 30S subunit, it contacts several helices of the 16S rRNA. In the 70S ribosome it contacts the 23S rRNA (bridge B1a) and protein L5 of the 50S subunit (bridge B1b), connecting the 2 subunits; these bridges are implicated in subunit movement. Contacts the tRNAs in the A and P-sites. The polypeptide is Small ribosomal subunit protein uS13 (Clostridium acetobutylicum (strain ATCC 824 / DSM 792 / JCM 1419 / IAM 19013 / LMG 5710 / NBRC 13948 / NRRL B-527 / VKM B-1787 / 2291 / W)).